Consider the following 354-residue polypeptide: Nicotinate-nucleotide--dimethylbenzimidazole phosphoribosyltransferase (354 aa).

Glutamate 319 functions as the Proton acceptor in the catalytic mechanism.

Belongs to the CobT family.

It carries out the reaction 5,6-dimethylbenzimidazole + nicotinate beta-D-ribonucleotide = alpha-ribazole 5'-phosphate + nicotinate + H(+). It participates in nucleoside biosynthesis; alpha-ribazole biosynthesis; alpha-ribazole from 5,6-dimethylbenzimidazole: step 1/2. Its function is as follows. Catalyzes the synthesis of alpha-ribazole-5'-phosphate from nicotinate mononucleotide (NAMN) and 5,6-dimethylbenzimidazole (DMB). The polypeptide is Nicotinate-nucleotide--dimethylbenzimidazole phosphoribosyltransferase (Chlorobium chlorochromatii (strain CaD3)).